The chain runs to 404 residues: Putative transporter AmpG 2 (404 aa).

Helical transmembrane passes span 11-31 (IYNI…YLLT), 49-69 (IGLF…GPLL), 84-104 (YCLI…TGFN), 109-129 (FISF…YDML), 154-174 (FRIG…IISW), 177-197 (VYRT…FYPL), 224-244 (WLII…LAVM), 261-281 (LGYK…GGFL), 294-311 (VLVY…LYSY), 315-337 (ITTL…SPFF), 353-373 (IALI…ISGY), and 378-398 (LGWG…YILI).

It belongs to the major facilitator superfamily.

Its subcellular location is the cell inner membrane. In Rickettsia bellii (strain RML369-C), this protein is Putative transporter AmpG 2 (ampG2).